A 72-amino-acid polypeptide reads, in one-letter code: Exodeoxyribonuclease 7 small subunit (72 aa).

Belongs to the XseB family. Heterooligomer composed of large and small subunits.

Its subcellular location is the cytoplasm. The catalysed reaction is Exonucleolytic cleavage in either 5'- to 3'- or 3'- to 5'-direction to yield nucleoside 5'-phosphates.. In terms of biological role, bidirectionally degrades single-stranded DNA into large acid-insoluble oligonucleotides, which are then degraded further into small acid-soluble oligonucleotides. This Clostridium kluyveri (strain NBRC 12016) protein is Exodeoxyribonuclease 7 small subunit.